Reading from the N-terminus, the 126-residue chain is Spermidine export protein MdtJ (126 aa).

4 consecutive transmembrane segments (helical) span residues 1–21 (MMIY…GTLS), 32–52 (TGHI…ALAV), 55–75 (VALG…ITVF), and 82–102 (ESLS…IMLV). Positions 104–126 (SGTRKPKKPNSPNRNSGEHHATA) are disordered.

Belongs to the drug/metabolite transporter (DMT) superfamily. Small multidrug resistance (SMR) (TC 2.A.7.1) family. MdtJ subfamily. As to quaternary structure, forms a complex with MdtI.

Its subcellular location is the cell inner membrane. Catalyzes the excretion of spermidine. The chain is Spermidine export protein MdtJ from Yersinia enterocolitica serotype O:8 / biotype 1B (strain NCTC 13174 / 8081).